We begin with the raw amino-acid sequence, 398 residues long: Putative tyrosine-protein phosphatase C15H7.3 (398 aa).

Residues 1-15 show a composition bias toward basic residues; the sequence is MERSQKSARKKKKTS. The disordered stretch occupies residues 1–114; sequence MERSQKSARK…EPWSEEEPAK (114 aa). The segment covering 18–40 has biased composition (basic and acidic residues); the sequence is GNDRSIRSERKSKQKKPAGEKSQ. Residues 41–50 show a composition bias toward basic residues; sequence KSRRTRKSRG. A compositionally biased stretch (polar residues) spans 55-73; the sequence is GFTSRETIQPSSSGQSEGT. Basic and acidic residues predominate over residues 74–114; that stretch reads TRMDDQKDEKKDDKKEEKKEERKEEKKEEVKEPWSEEEPAK. In terms of domain architecture, Tyrosine-protein phosphatase spans 125–376; it reads TNVGGTFKQT…GTVHRSMACW (252 aa).

It belongs to the protein-tyrosine phosphatase family. Non-receptor class subfamily.

The catalysed reaction is O-phospho-L-tyrosyl-[protein] + H2O = L-tyrosyl-[protein] + phosphate. This chain is Putative tyrosine-protein phosphatase C15H7.3, found in Caenorhabditis elegans.